The following is a 141-amino-acid chain: Putative nickel-responsive regulator (141 aa).

The Ni(2+) site is built by histidine 80, histidine 91, histidine 93, and cysteine 99.

Belongs to the transcriptional regulatory CopG/NikR family. Ni(2+) is required as a cofactor.

Transcriptional regulator. This is Putative nickel-responsive regulator from Methanococcus aeolicus (strain ATCC BAA-1280 / DSM 17508 / OCM 812 / Nankai-3).